A 165-amino-acid polypeptide reads, in one-letter code: Chorismate pyruvate-lyase (165 aa).

Substrate contacts are provided by Arg-77, Leu-115, and Glu-156.

Belongs to the UbiC family. Monomer.

Its subcellular location is the cytoplasm. It catalyses the reaction chorismate = 4-hydroxybenzoate + pyruvate. Its pathway is cofactor biosynthesis; ubiquinone biosynthesis. Removes the pyruvyl group from chorismate, with concomitant aromatization of the ring, to provide 4-hydroxybenzoate (4HB) for the ubiquinone pathway. The chain is Chorismate pyruvate-lyase from Salmonella typhi.